An 84-amino-acid polypeptide reads, in one-letter code: Beta-defensin 119 (84 aa).

The N-terminal stretch at 1 to 21 (MKLLYLFLAILLVIEEPVISG) is a signal peptide. 3 cysteine pairs are disulfide-bonded: cysteine 28–cysteine 55, cysteine 35–cysteine 49, and cysteine 39–cysteine 56.

Belongs to the beta-defensin family.

Its subcellular location is the secreted. Its function is as follows. Has antibacterial activity. The chain is Beta-defensin 119 (DEFB119) from Pongo pygmaeus (Bornean orangutan).